The primary structure comprises 423 residues: G protein-activated inward rectifier potassium channel 2 (423 aa).

The Cytoplasmic segment spans residues 1–89 (MAKLTESMTN…IFTTLVDLKW (89 aa)). Residues Ser16 and Ser23 each carry the phosphoserine modification. Residues 90 to 114 (RFNLLIFVMVYTVTWLFFGMIWWLI) traverse the membrane as a helical segment. The Extracellular segment spans residues 115 to 138 (AYIRGDMDHIEDPSWTPCVTNLNG). The segment at residues 139-150 (FVSAFLFSIETE) is an intramembrane region (helical; Pore-forming). The pore-forming intramembrane region spans 151–157 (TTIGYGY). The Selectivity filter signature appears at 152 to 157 (TIGYGY). At 158–166 (RVITDKCPE) the chain is on the extracellular side. Residues 167–188 (GIILLLIQSVLGSIVNAFMVGC) traverse the membrane as a helical segment. Over 189–423 (MFVKISQPKK…VANLENESKV (235 aa)) the chain is Cytoplasmic. The disordered stretch occupies residues 390 to 423 (NQHAELETEEEEKNLEEQTERNGDVANLENESKV). Positions 420–423 (ESKV) match the PDZ-binding motif.

It belongs to the inward rectifier-type potassium channel (TC 1.A.2.1) family. KCNJ6 subfamily. In terms of assembly, associates with KCNJ3/GIRK1 or KCNJ5/GRIK4 to form a G-protein-activated heteromultimer pore-forming unit. The resulting inward current is much larger. Interacts (via PDZ-binding motif) with SNX27 (via PDZ domain); the interaction is required when endocytosed to prevent degradation in lysosomes and promote recycling to the plasma membrane.

The protein resides in the membrane. It catalyses the reaction K(+)(in) = K(+)(out). Its activity is regulated as follows. Activated by phosphatidylinositol 4,5 biphosphate (PtdIns(4,5)P2). Inward rectifier potassium channels are characterized by a greater tendency to allow potassium to flow into the cell rather than out of it. Their voltage dependence is regulated by the concentration of extracellular potassium; as external potassium is raised, the voltage range of the channel opening shifts to more positive voltages. The inward rectification is mainly due to the blockage of outward current by internal magnesium. This potassium channel may be involved in the regulation of insulin secretion by glucose and/or neurotransmitters acting through G-protein-coupled receptors. This chain is G protein-activated inward rectifier potassium channel 2 (KCNJ6), found in Pongo abelii (Sumatran orangutan).